The chain runs to 227 residues: KH domain-containing protein MJ0443 (227 aa).

KH domains are found at residues 14-77 and 106-163; these read KSIE…RDIV and DYAS…KEAV.

This Methanocaldococcus jannaschii (strain ATCC 43067 / DSM 2661 / JAL-1 / JCM 10045 / NBRC 100440) (Methanococcus jannaschii) protein is KH domain-containing protein MJ0443.